The primary structure comprises 205 residues: Holliday junction branch migration complex subunit RuvA (205 aa).

The tract at residues 1–64 (MIGKLKGIID…EDQIKLFGFR (64 aa)) is domain I. The tract at residues 65 to 143 (TDTEREWFRL…ALSAVDPAVV (79 aa)) is domain II. The tract at residues 144 to 154 (KLSGAIDDNRA) is flexible linker. The interval 154–205 (APRAVTDAISALVNLGYGQPQAAAAVATASRTAGEDAETAQLIKLGLKELSK) is domain III.

It belongs to the RuvA family. Homotetramer. Forms an RuvA(8)-RuvB(12)-Holliday junction (HJ) complex. HJ DNA is sandwiched between 2 RuvA tetramers; dsDNA enters through RuvA and exits via RuvB. An RuvB hexamer assembles on each DNA strand where it exits the tetramer. Each RuvB hexamer is contacted by two RuvA subunits (via domain III) on 2 adjacent RuvB subunits; this complex drives branch migration. In the full resolvosome a probable DNA-RuvA(4)-RuvB(12)-RuvC(2) complex forms which resolves the HJ.

It is found in the cytoplasm. In terms of biological role, the RuvA-RuvB-RuvC complex processes Holliday junction (HJ) DNA during genetic recombination and DNA repair, while the RuvA-RuvB complex plays an important role in the rescue of blocked DNA replication forks via replication fork reversal (RFR). RuvA specifically binds to HJ cruciform DNA, conferring on it an open structure. The RuvB hexamer acts as an ATP-dependent pump, pulling dsDNA into and through the RuvAB complex. HJ branch migration allows RuvC to scan DNA until it finds its consensus sequence, where it cleaves and resolves the cruciform DNA. This chain is Holliday junction branch migration complex subunit RuvA, found in Rhodopseudomonas palustris (strain TIE-1).